Consider the following 502-residue polypeptide: Lysine--tRNA ligase (502 aa).

Mg(2+) contacts are provided by E413 and E420.

The protein belongs to the class-II aminoacyl-tRNA synthetase family. Homodimer. The cofactor is Mg(2+).

The protein localises to the cytoplasm. The enzyme catalyses tRNA(Lys) + L-lysine + ATP = L-lysyl-tRNA(Lys) + AMP + diphosphate. This Aromatoleum aromaticum (strain DSM 19018 / LMG 30748 / EbN1) (Azoarcus sp. (strain EbN1)) protein is Lysine--tRNA ligase.